An 892-amino-acid polypeptide reads, in one-letter code: Protein RRP6-like 3 (892 aa).

In terms of domain architecture, 3'-5' exonuclease spans 119 to 287 (YVWVETESQL…IADSLTTELK (169 aa)). Positions 350-436 (SLNAEELVRK…CSHLDDIYKM (87 aa)) constitute an HRDC domain. The interval 785–811 (VDDSGDGTSEGDGAKELNDTQCNGNTL) is disordered.

The protein resides in the cytoplasm. It localises to the cytosol. The sequence is that of Protein RRP6-like 3 from Arabidopsis thaliana (Mouse-ear cress).